Reading from the N-terminus, the 181-residue chain is MMYSAIASKYALALYNISKTNGKTETYKELLNILGDIYNLASVYLNNQAIKPENRVQFVLNIMKELKIEYDEIFRKFINLLIVNKRLKYINQIISFFDYTILEDKGLIPVNVTSAMELSKEEEEILSKFVEKYTNRKPVFNVTVDDSLIAGVVVEFAGKTLDVTVKGRLQNIARNILNREG.

The protein belongs to the ATPase delta chain family. As to quaternary structure, F-type ATPases have 2 components, F(1) - the catalytic core - and F(0) - the membrane proton channel. F(1) has five subunits: alpha(3), beta(3), gamma(1), delta(1), epsilon(1). F(0) has three main subunits: a(1), b(2) and c(10-14). The alpha and beta chains form an alternating ring which encloses part of the gamma chain. F(1) is attached to F(0) by a central stalk formed by the gamma and epsilon chains, while a peripheral stalk is formed by the delta and b chains.

The protein resides in the cell inner membrane. Its function is as follows. F(1)F(0) ATP synthase produces ATP from ADP in the presence of a proton or sodium gradient. F-type ATPases consist of two structural domains, F(1) containing the extramembraneous catalytic core and F(0) containing the membrane proton channel, linked together by a central stalk and a peripheral stalk. During catalysis, ATP synthesis in the catalytic domain of F(1) is coupled via a rotary mechanism of the central stalk subunits to proton translocation. In terms of biological role, this protein is part of the stalk that links CF(0) to CF(1). It either transmits conformational changes from CF(0) to CF(1) or is implicated in proton conduction. In Fervidobacterium nodosum (strain ATCC 35602 / DSM 5306 / Rt17-B1), this protein is ATP synthase subunit delta.